Consider the following 253-residue polypeptide: Major prion protein (253 aa).

The first 22 residues, 1-22, serve as a signal peptide directing secretion; the sequence is MANLGCWMLVLFVATWSDLGLC. An interaction with GRB2, ERI3 and SYN1 region spans residues 23–230; the sequence is KKRPKPGGWN…ESQAYYQRGS (208 aa). Residues 26 to 108 form a disordered region; it reads PKPGGWNTGG…WNKPSKPKTS (83 aa). 5 tandem repeats follow at residues 51-59, 60-67, 68-75, 76-83, and 84-91. A 5 X 8 AA tandem repeats of P-H-G-G-G-W-G-Q region spans residues 51–91; that stretch reads PQGGGGWGQPHGGGWGQPHGGGWGQPHGGGWGQPHGGGWGQ. The span at 52–95 shows a compositional bias: gly residues; the sequence is QGGGGWGQPHGGGWGQPHGGGWGQPHGGGWGQPHGGGWGQGGGT. His-61, Gly-62, Gly-63, His-69, Gly-70, Gly-71, His-77, Gly-78, Gly-79, His-85, Gly-86, and Gly-87 together coordinate Cu(2+). A disulfide bridge links Cys-179 with Cys-214. N-linked (GlcNAc...) asparagine glycans are attached at residues Asn-181 and Asn-197. The GPI-anchor amidated serine moiety is linked to residue Ser-230. The propeptide at 231-253 is removed in mature form; that stretch reads SMVFFSSPPVILLISFLIFLIVG.

It belongs to the prion family. Monomer and homodimer. Has a tendency to aggregate into amyloid fibrils containing a cross-beta spine, formed by a steric zipper of superposed beta-strands. Soluble oligomers may represent an intermediate stage on the path to fibril formation. Copper binding may promote oligomerization. Interacts with GRB2, APP, ERI3/PRNPIP and SYN1. Mislocalized cytosolically exposed PrP interacts with MGRN1; this interaction alters MGRN1 subcellular location and causes lysosomal enlargement. Interacts with KIAA1191.

It is found in the cell membrane. It localises to the golgi apparatus. Its function is as follows. Its primary physiological function is unclear. Has cytoprotective activity against internal or environmental stresses. May play a role in neuronal development and synaptic plasticity. May be required for neuronal myelin sheath maintenance. May play a role in iron uptake and iron homeostasis. Soluble oligomers are toxic to cultured neuroblastoma cells and induce apoptosis (in vitro). Association with GPC1 (via its heparan sulfate chains) targets PRNP to lipid rafts. Also provides Cu(2+) or Zn(2+) for the ascorbate-mediated GPC1 deaminase degradation of its heparan sulfate side chains. In Trachypithecus francoisi (Francois' leaf monkey), this protein is Major prion protein (PRNP).